We begin with the raw amino-acid sequence, 116 residues long: Large ribosomal subunit protein uL18 (116 aa).

It belongs to the universal ribosomal protein uL18 family. In terms of assembly, part of the 50S ribosomal subunit; part of the 5S rRNA/L5/L18/L25 subcomplex. Contacts the 5S and 23S rRNAs.

Functionally, this is one of the proteins that bind and probably mediate the attachment of the 5S RNA into the large ribosomal subunit, where it forms part of the central protuberance. This Pseudoalteromonas translucida (strain TAC 125) protein is Large ribosomal subunit protein uL18.